A 306-amino-acid chain; its full sequence is Probable 2-dehydro-3-deoxygalactonokinase DgoK1 (306 aa).

Belongs to the DgoK family.

It carries out the reaction 2-dehydro-3-deoxy-D-galactonate + ATP = 2-dehydro-3-deoxy-6-phospho-D-galactonate + ADP + H(+). Its pathway is carbohydrate acid metabolism; D-galactonate degradation; D-glyceraldehyde 3-phosphate and pyruvate from D-galactonate: step 2/3. Its function is as follows. Involved in the degradation of galactose via the DeLey-Doudoroff pathway. This chain is Probable 2-dehydro-3-deoxygalactonokinase DgoK1 (dgoK1), found in Rhizobium meliloti (strain 1021) (Ensifer meliloti).